The following is a 392-amino-acid chain: Nicotinate phosphoribosyltransferase (392 aa).

Histidine 216 carries the post-translational modification Phosphohistidine; by autocatalysis.

It belongs to the NAPRTase family. Post-translationally, transiently phosphorylated on a His residue during the reaction cycle. Phosphorylation strongly increases the affinity for substrates and increases the rate of nicotinate D-ribonucleotide production. Dephosphorylation regenerates the low-affinity form of the enzyme, leading to product release.

It carries out the reaction nicotinate + 5-phospho-alpha-D-ribose 1-diphosphate + ATP + H2O = nicotinate beta-D-ribonucleotide + ADP + phosphate + diphosphate. The protein operates within cofactor biosynthesis; NAD(+) biosynthesis; nicotinate D-ribonucleotide from nicotinate: step 1/1. Catalyzes the synthesis of beta-nicotinate D-ribonucleotide from nicotinate and 5-phospho-D-ribose 1-phosphate at the expense of ATP. The polypeptide is Nicotinate phosphoribosyltransferase (Cupriavidus necator (strain ATCC 17699 / DSM 428 / KCTC 22496 / NCIMB 10442 / H16 / Stanier 337) (Ralstonia eutropha)).